Reading from the N-terminus, the 749-residue chain is 1,4-alpha-glucan branching enzyme GlgB (749 aa).

Asp-415 (nucleophile) is an active-site residue. The Proton donor role is filled by Glu-468.

Belongs to the glycosyl hydrolase 13 family. GlgB subfamily. Monomer.

It catalyses the reaction Transfers a segment of a (1-&gt;4)-alpha-D-glucan chain to a primary hydroxy group in a similar glucan chain.. It functions in the pathway glycan biosynthesis; glycogen biosynthesis. Its function is as follows. Catalyzes the formation of the alpha-1,6-glucosidic linkages in glycogen by scission of a 1,4-alpha-linked oligosaccharide from growing alpha-1,4-glucan chains and the subsequent attachment of the oligosaccharide to the alpha-1,6 position. This chain is 1,4-alpha-glucan branching enzyme GlgB, found in Nitrosococcus oceani (strain ATCC 19707 / BCRC 17464 / JCM 30415 / NCIMB 11848 / C-107).